The primary structure comprises 338 residues: Inositol 2-dehydrogenase 3 (338 aa).

Belongs to the Gfo/Idh/MocA family. In terms of assembly, homotetramer.

It carries out the reaction myo-inositol + NAD(+) = scyllo-inosose + NADH + H(+). Functionally, involved in the oxidation of myo-inositol (MI) to 2-keto-myo-inositol (2KMI or 2-inosose). The polypeptide is Inositol 2-dehydrogenase 3 (Saccharopolyspora erythraea (strain ATCC 11635 / DSM 40517 / JCM 4748 / NBRC 13426 / NCIMB 8594 / NRRL 2338)).